Consider the following 1338-residue polypeptide: Centrosomal P4.1-associated protein (1338 aa).

Positions 190–211 (GLSLLPDDQSQKHRSPGNTTTG) are disordered. Phosphoserine is present on residues Ser260 and Ser316. The tract at residues 319–394 (VANIEERPIK…FTNAKSKFQK (76 aa)) is alpha/beta-tubulin binding. Disordered stretches follow at residues 386-414 (TNAKSKFQKGKESKLVTNQSTSEDQPLFK), 436-479 (PILK…QTGK), and 521-551 (QGKDRLPLSTGPASRLAAKSPIRETMKESES). Residues 400 to 409 (LVTNQSTSED) are compositionally biased toward polar residues. A Phosphoserine modification is found at Ser540. Positions 541 to 550 (PIRETMKESE) are enriched in basic and acidic residues. At Ser589 the chain carries Phosphoserine; by PLK2. Residue Ser595 is modified to Phosphoserine; by PLK2 and PLK4. 3 disordered regions span residues 611-789 (HRMS…LSLS), 845-865 (VKRGEDLSKSRRSRSPPTSEL), and 1096-1153 (YLPM…QGEI). Positions 635–650 (NRSEDLDHTAREKESE) are enriched in basic and acidic residues. Residues 679-689 (QKSTSENQTEW) are compositionally biased toward polar residues. Residues 717 to 764 (STEDRERGISSREDSPQVCDDKGPFKDTRTQEDKRRDVDLDLSDKDYS) show a composition bias toward basic and acidic residues. Position 759 is a phosphoserine (Ser759). Residues 895-1338 (QPPGDNARSQ…EGNVLMDTEL (444 aa)) are interaction with STIL. Residues 1140–1149 (YKEEEEDQDI) show a composition bias toward acidic residues.

It belongs to the TCP10 family. As to quaternary structure, forms homodimers. Associates with microtubules plus ends; binds to beta-tubulin subunits exposed on microtubule outer surface at its distal tip; also associates with microtubule lattice. Associated with the gamma-tubulin complex. Interacts with the head domain of EPB41. Interacts with LYST. Interacts with CEP152 (via C-terminus). Interacts with STIL. Forms a complex with STIL and SASS6. Post-translationally, phosphorylation at Ser-589 and Ser-595 by PLK2 is required for procentriole formation and centriole elongation. Phosphorylation by PLK2 oscillates during the cell cycle: it increases at G1/S transition and decreases during the exit from mitosis. Phosphorylation at Ser-595 is also mediated by PLK4 but is not a critical step in PLK4 function in procentriole assembly.

Its subcellular location is the cytoplasm. The protein localises to the cytoskeleton. It localises to the microtubule organizing center. The protein resides in the centrosome. It is found in the centriole. Its function is as follows. Plays an important role in cell division and centrosome function by participating in centriole duplication. Inhibits microtubule nucleation from the centrosome. Involved in the regulation of slow processive growth of centriolar microtubules. Acts as a microtubule plus-end tracking protein that stabilizes centriolar microtubules and inhibits microtubule polymerization and extension from the distal ends of centrioles. Required for centriole elongation and for STIL-mediated centriole amplification. Required for the recruitment of CEP295 to the proximal end of new-born centrioles at the centriolar microtubule wall during early S phase in a PLK4-dependent manner. May be involved in the control of centriolar-microtubule growth by acting as a regulator of tubulin release. The sequence is that of Centrosomal P4.1-associated protein from Homo sapiens (Human).